A 1224-amino-acid polypeptide reads, in one-letter code: ATP-dependent helicase/nuclease subunit A (1224 aa).

Residues 15-480 (VIWTDAQWQS…IDLSQNFRSR (466 aa)) form the UvrD-like helicase ATP-binding domain. 36–43 (AAAGSGKT) lines the ATP pocket. The region spanning 497-791 (EQVGEISYDD…RMMTIHSSKG (295 aa)) is the UvrD-like helicase C-terminal domain.

It belongs to the helicase family. AddA subfamily. As to quaternary structure, heterodimer of AddA and AddB/RexB. Requires Mg(2+) as cofactor.

The enzyme catalyses Couples ATP hydrolysis with the unwinding of duplex DNA by translocating in the 3'-5' direction.. The catalysed reaction is ATP + H2O = ADP + phosphate + H(+). Functionally, the heterodimer acts as both an ATP-dependent DNA helicase and an ATP-dependent, dual-direction single-stranded exonuclease. Recognizes the chi site generating a DNA molecule suitable for the initiation of homologous recombination. The AddA nuclease domain is required for chi fragment generation; this subunit has the helicase and 3' -&gt; 5' nuclease activities. The polypeptide is ATP-dependent helicase/nuclease subunit A (Staphylococcus epidermidis (strain ATCC 12228 / FDA PCI 1200)).